A 159-amino-acid polypeptide reads, in one-letter code: NADH-quinone oxidoreductase subunit I (159 aa).

4Fe-4S ferredoxin-type domains are found at residues 51-80 (RRYE…IEAD) and 90-119 (TRYD…EGPN). Positions 60, 63, 66, 70, 99, 102, 105, and 109 each coordinate [4Fe-4S] cluster.

The protein belongs to the complex I 23 kDa subunit family. NDH-1 is composed of 14 different subunits. Subunits NuoA, H, J, K, L, M, N constitute the membrane sector of the complex. It depends on [4Fe-4S] cluster as a cofactor.

The protein localises to the cell inner membrane. It carries out the reaction a quinone + NADH + 5 H(+)(in) = a quinol + NAD(+) + 4 H(+)(out). Functionally, NDH-1 shuttles electrons from NADH, via FMN and iron-sulfur (Fe-S) centers, to quinones in the respiratory chain. The immediate electron acceptor for the enzyme in this species is believed to be ubiquinone. Couples the redox reaction to proton translocation (for every two electrons transferred, four hydrogen ions are translocated across the cytoplasmic membrane), and thus conserves the redox energy in a proton gradient. In Rickettsia akari (strain Hartford), this protein is NADH-quinone oxidoreductase subunit I.